A 90-amino-acid polypeptide reads, in one-letter code: Small ribosomal subunit protein bS16 (90 aa).

It belongs to the bacterial ribosomal protein bS16 family.

In Lactobacillus delbrueckii subsp. bulgaricus (strain ATCC 11842 / DSM 20081 / BCRC 10696 / JCM 1002 / NBRC 13953 / NCIMB 11778 / NCTC 12712 / WDCM 00102 / Lb 14), this protein is Small ribosomal subunit protein bS16.